The primary structure comprises 358 residues: Tripartite motif-containing protein 54 (358 aa).

The RING-type zinc finger occupies 26 to 82; it reads CPICLEMFSKPVVILPCQHNLCRKCANDVFQASNPLWQSRGSTTVSSGGRFRCPSCR. The B box-type zinc-finger motif lies at 121 to 163; that stretch reads EQHLMCEEHEEEKINIYCLSCEVPTCSLCKVFGAHKDCEVAPL. Residues cysteine 126, histidine 129, cysteine 149, and histidine 155 each contribute to the Zn(2+) site. Residues 168–211 form a mediates microtubule-binding and homooligomerization region; sequence KRQKSELSDGIAMLVAGNDRVQAVITQMEEVCQTIEDNSRRQKQ. Positions 220-258 form a coiled coil; the sequence is LCAVLEERKGELLQALAREQEEKLQRVRGLIRQYGDHLE. The COS domain occupies 271–329; that stretch reads MEEPQMALYLQQAKELINKVGAMSKVELAGRPEPGYESMEQFTVRVEHVAEMLRTIDFQ. The tract at residues 326 to 358 is disordered; that stretch reads IDFQPGASGEEEEVAPDGEEGSAGPEEERPDGP. A compositionally biased stretch (acidic residues) spans 334–345; it reads GEEEEVAPDGEE.

Homooligomer and heterooligomer. Interacts with tubulin. Interacts with TRIM63 and probably with TRIM55. In terms of tissue distribution, specifically expressed in heart and skeletal muscle.

It is found in the cytoplasm. It localises to the cytoskeleton. Its subcellular location is the myofibril. The protein resides in the sarcomere. The protein localises to the z line. May bind and stabilize microtubules during myotubes formation. The protein is Tripartite motif-containing protein 54 (TRIM54) of Homo sapiens (Human).